Here is a 103-residue protein sequence, read N- to C-terminus: Non-histone chromosomal protein 6 (103 aa).

Disordered regions lie at residues 1–30 and 70–103; these read MPKAAAKSKTTGKVEKRRAKKDPNAPKRGL and KQRAPYEAKAAADKKRYEDEKQAYNAEADEEESS. The segment at residues 26-94 is a DNA-binding region (HMG box); sequence PKRGLSAYMF…RYEDEKQAYN (69 aa). Over residues 70 to 91 the composition is skewed to basic and acidic residues; that stretch reads KQRAPYEAKAAADKKRYEDEKQ.

This sequence belongs to the NHP6 family. As to quaternary structure, weakly associates with the stable heterodimer of ctc-1/pob3 and ctc-2/spt16 to form the FACT complex.

The protein localises to the nucleus. It is found in the chromosome. DNA-binding protein that induces severe bending of DNA. Required for DNA-binding by the FACT complex, a general chromatin factor that acts to reorganize nucleosomes. The FACT complex is involved in multiple processes that require DNA as a template such as mRNA elongation, DNA replication and DNA repair. Also augments the fidelity of transcription by RNA polymerase III independently of any role in the FACT complex. This chain is Non-histone chromosomal protein 6 (nhp-1), found in Neurospora crassa (strain ATCC 24698 / 74-OR23-1A / CBS 708.71 / DSM 1257 / FGSC 987).